Reading from the N-terminus, the 1483-residue chain is Heme-responsive zinc finger transcription factor HAP1 (1483 aa).

Residues 1–50 (MSNTPYNSSVPSIASMTQSSVSRSPNMHTATTPGANTSSNSPPLHMSSDS) show a composition bias toward polar residues. The interval 1–56 (MSNTPYNSSVPSIASMTQSSVSRSPNMHTATTPGANTSSNSPPLHMSSDSSKIKRK) is disordered. Zn(2+)-binding residues include Cys64, Cys67, Cys74, Cys81, Cys84, and Cys93. Positions 64 to 93 (CTICRKRKVKCDKLRPHCQQCTKTGVAHLC) form a DNA-binding region, zn(2)-C6 fungal-type. Positions 105-134 (EKELLKDNELKKLRERVKSLEKTLSKVHSS) form a coiled coil. The span at 162–176 (VNANTGSASSASHMH) shows a compositional bias: polar residues. The interval 162–208 (VNANTGSASSASHMHQQQQQQQQQEQQQDFSRSANANANSSSLSISN) is disordered. A compositionally biased stretch (low complexity) spans 177–208 (QQQQQQQQQEQQQDFSRSANANANSSSLSISN). The tract at residues 244–444 (KGDPYLKLLW…NTIPHHQPQS (201 aa)) is heme-responsive; required for HMC formation. HRM repeat units follow at residues 280 to 285 (KCPINH), 299 to 304 (KCPVDH), 323 to 328 (KCPVDH), 347 to 352 (RCPVDH), 389 to 394 (KCPVDH), and 415 to 420 (RCPIDH). 2 stretches are compositionally biased toward polar residues: residues 432-447 (STHN…SGSH) and 706-734 (QLNA…NPTL). 2 disordered regions span residues 432–458 (STHN…NRKH) and 706–767 (QLNA…KENQ). Residues 735–759 (NNNMSAATTNSSSRSGSADSRSGSN) are compositionally biased toward low complexity. The HRM 7 repeat unit spans residues 1192–1197 (KCPVYQ). Residues 1384–1411 (TANTDTSANGSALSTLTSPQGSDLASNS) are disordered. The segment covering 1388 to 1411 (DTSANGSALSTLTSPQGSDLASNS) has biased composition (polar residues).

In terms of assembly, binds DNA as a homodimer. Interacts with SRO9 and YDJ1. In the absence of heme, binds to at least four cellular proteins, including YDJ1 and SRO9, forming a high-molecular-weight complex (HMC) which results in repression of its activity and dictates its DNA-binding specificity.

It is found in the nucleus. Regulation of oxygen dependent gene expression. It modulates the expression of Iso-1 (CYP1) and Iso-2 (CYP3) cytochrome c. In response to heme, promotes transcription of genes encoding functions required for respiration, controlling oxidative damage and repression of anaerobic genes. Binds to the sequence 5'-CGGNNNTNNCGG-3'. The polypeptide is Heme-responsive zinc finger transcription factor HAP1 (HAP1) (Saccharomyces cerevisiae (strain RM11-1a) (Baker's yeast)).